Here is a 155-residue protein sequence, read N- to C-terminus: Egg-lysin (155 aa).

A signal peptide spans 1–18; the sequence is MKLLVLCLFAMMATLAVS.

In terms of assembly, monomer. Homodimer. Molecules associate into dimers and then rapidly dissociate again. Interacts (as a monomer) with the egg vitelline layer protein VERL (via VERL repeats); each VERL chain can bind multiple copies of lysin. Sperm (at protein level).

It is found in the cytoplasmic vesicle. The protein localises to the secretory vesicle. Its subcellular location is the acrosome lumen. In terms of biological role, creates a 3 um hole in the egg vitelline layer through which the sperm passes. Does not have enzyme activity. Species-specific interaction between the sperm protein lysin and the egg protein VERL exposes a basic surface on lysin that may dissociate the egg vitelline layer via electrostatic repulsion. Plays a role in ensuring species-specific fertilization. In Haliotis corrugata (Pink abalone), this protein is Egg-lysin.